A 231-amino-acid chain; its full sequence is uncharacterized protein (231 aa).

Residues 43–76 (YKVKVDLDNNYFGLCTCQYKYNCKHAYALIEAYE) form an SWIM-type zinc finger.

This is an uncharacterized protein from Methanocaldococcus jannaschii (strain ATCC 43067 / DSM 2661 / JAL-1 / JCM 10045 / NBRC 100440) (Methanococcus jannaschii).